A 140-amino-acid polypeptide reads, in one-letter code: Large ribosomal subunit protein uL14 (140 aa).

It belongs to the universal ribosomal protein uL14 family. In terms of assembly, component of the large ribosomal subunit.

It localises to the cytoplasm. Its function is as follows. Component of the large ribosomal subunit. The ribosome is a large ribonucleoprotein complex responsible for the synthesis of proteins in the cell. The sequence is that of Large ribosomal subunit protein uL14 (rpl23) from Ictalurus punctatus (Channel catfish).